The primary structure comprises 78 residues: WAP four-disulfide core domain protein 12 (78 aa).

Residues 1–21 (MWPNSILVLTVLLISSTLVTG) form the signal peptide. The WAP domain maps to 25–72 (KGAEKGVCPPDNVRCIRGEDPQCHNDNDCKDQKICCYWHCGFKCVQPV). 4 disulfide bridges follow: C32–C60, C39–C64, C47–C59, and C53–C68.

The protein localises to the secreted. Its function is as follows. Antibacterial protein. Putative acid-stable proteinase inhibitor. The sequence is that of WAP four-disulfide core domain protein 12 from Rattus norvegicus (Rat).